Consider the following 404-residue polypeptide: MAFCSPHTTTSLRSPCTTIPNSGFRQNQVIFFTTRSSRRSNTRHGARTFQVSCAVEQPIVIGLAADSGCGKSTFMRRLTSVFGGAAEPPKGGNPDSNTLISDTTTVICLDDYHSLDRTGRKEKGVTALDPKANDFDLMYEQVKAIKEGKAIEKPIYNHVTGLLDPAELIQPPKIFVIEGLHPMYDERVRELLDFSIYLDISNEVKFAWKIQRDMAERGHSLESIKASIEARKPDFDAFIDPQKQYADAVIEVLPTQLIPDDNEGKVLRVKLIMKEGIKFFNPVYLFDEGSTINWIPCGRKLTCSYPGIKFSYGPDTYFGQEVSVLEMDGQFDRLDELIYVESHLSNLSTKFYGEVTQQMLKHADFPGSNNGTGLFQTIVGLKIRDLYEQIIAERAGVPAEAAKV.

A chloroplast-targeting transit peptide spans 1-53; that stretch reads MAFCSPHTTTSLRSPCTTIPNSGFRQNQVIFFTTRSSRRSNTRHGARTFQVSC. A disulfide bond links Cys69 and Cys108.

The protein belongs to the phosphoribulokinase family.

The protein resides in the plastid. It is found in the chloroplast. It carries out the reaction D-ribulose 5-phosphate + ATP = D-ribulose 1,5-bisphosphate + ADP + H(+). Its pathway is carbohydrate biosynthesis; Calvin cycle. Its activity is regulated as follows. Light regulated via thioredoxin by reversible oxidation/reduction of sulfhydryl/disulfide groups. This Triticum aestivum (Wheat) protein is Phosphoribulokinase, chloroplastic.